The chain runs to 293 residues: Aromatic amino acid exporter YddG (293 aa).

Residues 1–6 are Cytoplasmic-facing; the sequence is MTRQKA. Residues 6-137 enclose the EamA 1 domain; it reads ATLIGLIAIV…LALVGVCWVL (132 aa). The helical transmembrane segment at 7–27 threads the bilayer; the sequence is TLIGLIAIVLWSTMVGLIRGV. Residues 28 to 33 are Periplasmic-facing; sequence SEGLGP. The helical transmembrane segment at 34-54 threads the bilayer; it reads VGGAAAIYSLSGLLLIFTVGF. The Cytoplasmic portion of the chain corresponds to 55–62; sequence PRIRQIPK. A helical transmembrane segment spans residues 63 to 83; it reads GYLLAGSLLFVSYEICLALSL. Topologically, residues 84 to 92 are periplasmic; sequence GYAATHHQA. The helical transmembrane segment at 93–113 threads the bilayer; the sequence is IEVGMVNYLWPSLTILFAILF. At 114-118 the chain is on the cytoplasmic side; the sequence is NGQKT. A helical membrane pass occupies residues 119-139; it reads NWLIVPGLLLALVGVCWVLGG. At 140 to 155 the chain is on the periplasmic side; that stretch reads DNGLHYDEIINNITTS. Residues 156–176 form a helical membrane-spanning segment; it reads PLSYFLAFIGAFIWAAYCTVT. In terms of domain architecture, EamA 2 spans 158 to 285; that stretch reads SYFLAFIGAF…ALMVCGGSLL (128 aa). At 177–182 the chain is on the cytoplasmic side; that stretch reads NKYARG. A helical membrane pass occupies residues 183–203; the sequence is FNGITVFVLLTGASLWVYYFL. Residues 204–218 are Periplasmic-facing; that stretch reads TPQPEMIFSTPVMIK. Residues 219 to 239 form a helical membrane-spanning segment; the sequence is LISAAFTLGFAYAAWNVGILH. The Cytoplasmic portion of the chain corresponds to 240–243; that stretch reads GNVT. A helical transmembrane segment spans residues 244–264; sequence IMAVGSYFTPVLSSALAAVLL. Topologically, residues 265–267 are periplasmic; that stretch reads SAP. The helical transmembrane segment at 268–288 threads the bilayer; sequence LSFSFWQGALMVCGGSLLCWL. At 289–293 the chain is on the cytoplasmic side; sequence ATRRG.

This sequence belongs to the drug/metabolite transporter (DMT) superfamily. Aromatic amino acid/paraquat exporter (ArAA/P-E) (TC 2.A.7.17) family.

It localises to the cell inner membrane. The enzyme catalyses L-phenylalanine(in) = L-phenylalanine(out). The catalysed reaction is L-tyrosine(in) = L-tyrosine(out). It carries out the reaction L-tryptophan(in) = L-tryptophan(out). It catalyses the reaction L-threonine(in) = L-threonine(out). The enzyme catalyses L-methionine(in) = L-methionine(out). The catalysed reaction is L-lysine(in) = L-lysine(out). It carries out the reaction L-glutamate(out) = L-glutamate(in). It catalyses the reaction L-valine(in) = L-valine(out). The enzyme catalyses L-isoleucine(in) = L-isoleucine(out). In terms of biological role, amino acid transporter with broad substrate specificity. Can transport various amino acids, including phenylalanine, tyrosine, tryptophan, L-threonine, L-methionine, L-lysine, L-glutamate, L-valine and L-isoleucine. Overexpression confers resistance to phenylalanine and increases export of phenylalanine, tyrosine and tryptophan. The chain is Aromatic amino acid exporter YddG (yddG) from Escherichia coli (strain K12).